Here is a 454-residue protein sequence, read N- to C-terminus: Photosystem II CP47 reaction center protein (454 aa).

6 helical membrane passes run 6 to 26, 47 to 61, 86 to 102, 149 to 164, 183 to 198, and 403 to 418; these read MFVLPFMTRLGVTNSWGGWTI, IILSGLLFLAAIWHW, GIHLFLSGVLCFGFGAF, IAAGIVGILAGLFHLS, VLSSSIAAVFWAAFVV, and SFALLFFFGHIWHGAR.

Belongs to the PsbB/PsbC family. PsbB subfamily. In terms of assembly, PSII is composed of 1 copy each of membrane proteins PsbA, PsbB, PsbC, PsbD, PsbE, PsbF, PsbH, PsbI, PsbJ, PsbK, PsbL, PsbM, PsbT, PsbX, PsbY, PsbZ, Psb30/Ycf12, at least 3 peripheral proteins of the oxygen-evolving complex and a large number of cofactors. It forms dimeric complexes. Binds multiple chlorophylls. PSII binds additional chlorophylls, carotenoids and specific lipids. is required as a cofactor.

It localises to the plastid. Its subcellular location is the chloroplast thylakoid membrane. One of the components of the core complex of photosystem II (PSII). It binds chlorophyll and helps catalyze the primary light-induced photochemical processes of PSII. PSII is a light-driven water:plastoquinone oxidoreductase, using light energy to abstract electrons from H(2)O, generating O(2) and a proton gradient subsequently used for ATP formation. This Ostreococcus tauri protein is Photosystem II CP47 reaction center protein.